The following is a 296-amino-acid chain: Protein-export membrane protein SecF (296 aa).

A run of 6 helical transmembrane segments spans residues 23-43 (MIIY…ANYV), 144-164 (AIVY…RVPV), 169-189 (VVFS…IFGI), 194-214 (ATIA…ILLT), 236-256 (GFTM…FSTA), and 265-285 (VLIF…AGVL).

Belongs to the SecD/SecF family. SecF subfamily. In terms of assembly, part of the protein translocation apparatus. Forms a complex with SecD.

The protein localises to the cell membrane. Its function is as follows. Involved in protein export. The protein is Protein-export membrane protein SecF of Pyrococcus furiosus (strain ATCC 43587 / DSM 3638 / JCM 8422 / Vc1).